Here is a 482-residue protein sequence, read N- to C-terminus: 2-succinylbenzoate--CoA ligase (482 aa).

The protein belongs to the ATP-dependent AMP-binding enzyme family. MenE subfamily.

It carries out the reaction 2-succinylbenzoate + ATP + CoA = 2-succinylbenzoyl-CoA + AMP + diphosphate. Its pathway is quinol/quinone metabolism; 1,4-dihydroxy-2-naphthoate biosynthesis; 1,4-dihydroxy-2-naphthoate from chorismate: step 5/7. It functions in the pathway quinol/quinone metabolism; menaquinone biosynthesis. Its function is as follows. Converts 2-succinylbenzoate (OSB) to 2-succinylbenzoyl-CoA (OSB-CoA). This Bacillus cereus (strain ATCC 14579 / DSM 31 / CCUG 7414 / JCM 2152 / NBRC 15305 / NCIMB 9373 / NCTC 2599 / NRRL B-3711) protein is 2-succinylbenzoate--CoA ligase.